We begin with the raw amino-acid sequence, 213 residues long: A-type ATP synthase subunit D (213 aa).

The protein belongs to the V-ATPase D subunit family. Has multiple subunits with at least A(3), B(3), C, D, E, F, H, I and proteolipid K(x).

Its subcellular location is the cell membrane. Component of the A-type ATP synthase that produces ATP from ADP in the presence of a proton gradient across the membrane. The polypeptide is A-type ATP synthase subunit D (Saccharolobus islandicus (strain Y.N.15.51 / Yellowstone #2) (Sulfolobus islandicus)).